Here is a 485-residue protein sequence, read N- to C-terminus: tRNA-2-methylthio-N(6)-dimethylallyladenosine synthase (485 aa).

The MTTase N-terminal domain maps to 37–154 (GKLYIKTHGC…LPELIRARRE (118 aa)). [4Fe-4S] cluster-binding residues include cysteine 46, cysteine 83, cysteine 117, cysteine 191, cysteine 195, and cysteine 198. In terms of domain architecture, Radical SAM core spans 177–416 (RADGPSAFVS…HINAHAAGIS (240 aa)). One can recognise a TRAM domain in the interval 417–480 (QRMVGSVQRV…SNSLRGRIQL (64 aa)).

This sequence belongs to the methylthiotransferase family. MiaB subfamily. As to quaternary structure, monomer. Requires [4Fe-4S] cluster as cofactor.

It is found in the cytoplasm. It catalyses the reaction N(6)-dimethylallyladenosine(37) in tRNA + (sulfur carrier)-SH + AH2 + 2 S-adenosyl-L-methionine = 2-methylsulfanyl-N(6)-dimethylallyladenosine(37) in tRNA + (sulfur carrier)-H + 5'-deoxyadenosine + L-methionine + A + S-adenosyl-L-homocysteine + 2 H(+). In terms of biological role, catalyzes the methylthiolation of N6-(dimethylallyl)adenosine (i(6)A), leading to the formation of 2-methylthio-N6-(dimethylallyl)adenosine (ms(2)i(6)A) at position 37 in tRNAs that read codons beginning with uridine. The protein is tRNA-2-methylthio-N(6)-dimethylallyladenosine synthase of Xanthomonas campestris pv. campestris (strain 8004).